Consider the following 586-residue polypeptide: Dual specificity tyrosine-phosphorylation-regulated kinase 3 (586 aa).

The segment covering methionine 1–alanine 13 has biased composition (basic and acidic residues). The disordered stretch occupies residues methionine 1 to glycine 187. The Protein kinase domain maps to tyrosine 208–isoleucine 521. Residues isoleucine 214 to valine 222, lysine 237, and phenylalanine 287 to leucine 290 contribute to the ATP site. Residue aspartate 334 is the Proton acceptor of the active site. Tyrosine 368 carries the post-translational modification Phosphotyrosine. The Nuclear localization signal motif lies at arginine 467–lysine 480.

Belongs to the protein kinase superfamily. CMGC Ser/Thr protein kinase family. MNB/DYRK subfamily. In terms of assembly, interacts with SIRT1. It depends on Mg(2+) as a cofactor. In terms of processing, ubiquitinated at anaphase by the anaphase-promoting complex (APC/C), leading to its degradation by the proteasome. Post-translationally, protein kinase activity is activated following autophosphorylation at Tyr-368.

The protein resides in the nucleus. It localises to the cytoplasm. The protein localises to the nucleus speckle. Its subcellular location is the cytoplasmic granule. It is found in the cytoskeleton. The protein resides in the microtubule organizing center. It localises to the centrosome. It carries out the reaction L-seryl-[protein] + ATP = O-phospho-L-seryl-[protein] + ADP + H(+). It catalyses the reaction L-threonyl-[protein] + ATP = O-phospho-L-threonyl-[protein] + ADP + H(+). The enzyme catalyses L-tyrosyl-[protein] + ATP = O-phospho-L-tyrosyl-[protein] + ADP + H(+). Protein kinase activity is activated following autophosphorylation at Tyr-368. Its function is as follows. Dual-specificity protein kinase that promotes disassembly of several types of membraneless organelles during mitosis, such as stress granules, nuclear speckles and pericentriolar material. Dual-specificity tyrosine-regulated kinases (DYRKs) autophosphorylate a critical tyrosine residue in their activation loop and phosphorylate their substrate on serine and threonine residues. Acts as a central dissolvase of membraneless organelles during the G2-to-M transition, after the nuclear-envelope breakdown: acts by mediating phosphorylation of multiple serine and threonine residues in unstructured domains of proteins, such as SRRM1 and PCM1. Does not mediate disassembly of all membraneless organelles: disassembly of P-body and nucleolus is not regulated by DYRK3. Dissolution of membraneless organelles at the onset of mitosis is also required to release mitotic regulators, such as ZNF207, from liquid-unmixed organelles where they are sequestered and keep them dissolved during mitosis. Regulates mTORC1 by mediating the dissolution of stress granules: during stressful conditions, DYRK3 partitions from the cytosol to the stress granule, together with mTORC1 components, which prevents mTORC1 signaling. When stress signals are gone, the kinase activity of DYRK3 is required for the dissolution of stress granule and mTORC1 relocation to the cytosol: acts by mediating the phosphorylation of the mTORC1 inhibitor AKT1S1, allowing full reactivation of mTORC1 signaling. Also acts as a negative regulator of EPO-dependent erythropoiesis: may place an upper limit on red cell production during stress erythropoiesis. Inhibits cell death due to cytokine withdrawal in hematopoietic progenitor cells. Promotes cell survival upon genotoxic stress through phosphorylation of SIRT1: this in turn inhibits p53/TP53 activity and apoptosis. The protein is Dual specificity tyrosine-phosphorylation-regulated kinase 3 of Mus musculus (Mouse).